Reading from the N-terminus, the 913-residue chain is Eukaryotic translation initiation factor 3 subunit C (913 aa).

A disordered region spans residues 1–31; it reads MSRFFANGSDSESESSEEEVQASNFNKANNF. Residues 11-20 are compositionally biased toward acidic residues; sequence SESESSEEEV. Positions 21-31 are enriched in polar residues; it reads QASNFNKANNF. Phosphoserine occurs at positions 34, 165, 177, and 186. Disordered regions lie at residues 157–195 and 208–285; these read FREA…AGTG and PTKV…EDGE. A compositionally biased stretch (acidic residues) spans 162 to 171; the sequence is DQESDVDEGE. The segment covering 172–184 has biased composition (basic and acidic residues); the sequence is GEAHDSDAERAGA. The segment covering 214 to 239 has biased composition (acidic residues); sequence DEDDSDDSIDWDSDTESETESSEDEN. A compositionally biased stretch (basic and acidic residues) spans 244–263; it reads MRERFLKRTTEKEDKDDDKR. Basic residues predominate over residues 264–276; the sequence is KDKRKEQKHKVRK. The PCI domain maps to 645-821; it reads FHMHINLELL…ETVVMHRSEP (177 aa). The disordered stretch occupies residues 856–913; it reads RGNMGNRDRGYNRNQNNQGGNWGGQRRDNRNQRNRNQRGHHKQQQQQQQQQVQTIEEE. The span at 887 to 898 shows a compositional bias: basic residues; sequence QRNRNQRGHHKQ.

It belongs to the eIF-3 subunit C family. In terms of assembly, component of the eukaryotic translation initiation factor 3 (eIF-3) complex. The eIF-3 complex interacts with pix.

Its subcellular location is the cytoplasm. Functionally, component of the eukaryotic translation initiation factor 3 (eIF-3) complex, which is involved in protein synthesis of a specialized repertoire of mRNAs and, together with other initiation factors, stimulates binding of mRNA and methionyl-tRNAi to the 40S ribosome. The eIF-3 complex specifically targets and initiates translation of a subset of mRNAs involved in cell proliferation. This is Eukaryotic translation initiation factor 3 subunit C from Drosophila virilis (Fruit fly).